The chain runs to 157 residues: Large ribosomal subunit protein uL11 (157 aa).

It belongs to the universal ribosomal protein uL11 family. In terms of assembly, part of the ribosomal stalk of the 50S ribosomal subunit. Interacts with L10 and the large rRNA to form the base of the stalk. L10 forms an elongated spine to which L12 dimers bind in a sequential fashion forming a multimeric L10(L12)X complex.

Its function is as follows. Forms part of the ribosomal stalk which helps the ribosome interact with GTP-bound translation factors. The sequence is that of Large ribosomal subunit protein uL11 from Methanocorpusculum labreanum (strain ATCC 43576 / DSM 4855 / Z).